The following is a 152-amino-acid chain: Lipoprotein signal peptidase (152 aa).

Transmembrane regions (helical) follow at residues 55–75 (NKMW…VFYM) and 85–105 (LGIS…DRVF). Catalysis depends on residues D111 and D129. Residues 124 to 144 (VFNIADSALCIGVVLIIIQTL) form a helical membrane-spanning segment.

It belongs to the peptidase A8 family.

It is found in the cell membrane. The catalysed reaction is Release of signal peptides from bacterial membrane prolipoproteins. Hydrolyzes -Xaa-Yaa-Zaa-|-(S,diacylglyceryl)Cys-, in which Xaa is hydrophobic (preferably Leu), and Yaa (Ala or Ser) and Zaa (Gly or Ala) have small, neutral side chains.. It functions in the pathway protein modification; lipoprotein biosynthesis (signal peptide cleavage). Its function is as follows. This protein specifically catalyzes the removal of signal peptides from prolipoproteins. This is Lipoprotein signal peptidase from Bacillus cereus (strain AH187).